A 368-amino-acid chain; its full sequence is Alkaline phosphatase L (368 aa).

Residues 1-23 (MFKRSLIAASLSVAALVSAQAMA) form the signal peptide.

The protein belongs to the PstS family. Homodimer.

The protein localises to the secreted. It is found in the periplasm. It catalyses the reaction a phosphate monoester + H2O = an alcohol + phosphate. Has both a phosphomonoesterase and phosphodiesterase activity. This Pseudomonas aeruginosa (strain ATCC 15692 / DSM 22644 / CIP 104116 / JCM 14847 / LMG 12228 / 1C / PRS 101 / PAO1) protein is Alkaline phosphatase L.